The following is a 430-amino-acid chain: Trigger factor (430 aa).

Residues Gly163–Pro248 enclose the PPIase FKBP-type domain.

This sequence belongs to the FKBP-type PPIase family. Tig subfamily.

The protein resides in the cytoplasm. It carries out the reaction [protein]-peptidylproline (omega=180) = [protein]-peptidylproline (omega=0). Involved in protein export. Acts as a chaperone by maintaining the newly synthesized protein in an open conformation. Functions as a peptidyl-prolyl cis-trans isomerase. This Clostridium botulinum (strain Loch Maree / Type A3) protein is Trigger factor.